Reading from the N-terminus, the 1089-residue chain is Probable transport protein MmpL8 (1089 aa).

The tract at residues 1–26 (MCDVLMQPVRTPRPSTNLRSKPLRPT) is disordered. 12 helical membrane passes run 44–64 (WVVI…VPSL), 222–242 (ITIL…TMVL), 257–277 (LVAI…IFMS), 316–336 (IGKV…GMVF), 349–369 (LGIS…ALMV), 400–420 (KTHL…AGLA), 555–575 (AIST…LLGG), 874–894 (IIAM…RAIV), 898–918 (YLIG…VIVF), 930–950 (IPGL…MLLI), 973–993 (GGVI…LVFA), and 996–1016 (GSVV…TFLV). Positions 1056–1078 (RTKRKPLLPKEEEEQSPPDDDDL) are disordered. Residues 1066 to 1078 (EEEEQSPPDDDDL) show a composition bias toward acidic residues.

Belongs to the resistance-nodulation-cell division (RND) (TC 2.A.6) family. MmpL subfamily.

The protein localises to the cell membrane. In Mycobacterium tuberculosis (strain ATCC 25177 / H37Ra), this protein is Probable transport protein MmpL8 (mmpL8).